We begin with the raw amino-acid sequence, 313 residues long: Ribosomal protein L11 methyltransferase (313 aa).

Threonine 161, glycine 182, aspartate 204, and asparagine 246 together coordinate S-adenosyl-L-methionine.

It belongs to the methyltransferase superfamily. PrmA family.

It is found in the cytoplasm. The catalysed reaction is L-lysyl-[protein] + 3 S-adenosyl-L-methionine = N(6),N(6),N(6)-trimethyl-L-lysyl-[protein] + 3 S-adenosyl-L-homocysteine + 3 H(+). Its function is as follows. Methylates ribosomal protein L11. The sequence is that of Ribosomal protein L11 methyltransferase from Acetivibrio thermocellus (strain ATCC 27405 / DSM 1237 / JCM 9322 / NBRC 103400 / NCIMB 10682 / NRRL B-4536 / VPI 7372) (Clostridium thermocellum).